A 277-amino-acid chain; its full sequence is MHLLETRDLTHIYRGDVHALEGVNFTAERKSRIAVIGPNGAGKSTLFKHFNGILKPTSGEVLVRGEPITKENVREVRKFVGIVFQNPDDQIFSPTVEQDIAFGPINLGLDEATVAHRVEEALHLLGIEELRERVPHHLSGGEKKRVAIAGILAMEPQVLVLDEPTAGLDPQGVADLVAFVNRLPEEYGMTVVFSTHHLDLVAEMADYIYVMDKGRVVGSGTVEEVFTRPELLTQTRLDVPPIPKLIRSLRENGVAIDMAYTYEDAKKSFLDAYARRA.

One can recognise an ABC transporter domain in the interval 4-238; that stretch reads LETRDLTHIY…PELLTQTRLD (235 aa). An ATP-binding site is contributed by 37–44; sequence GPNGAGKS.

This sequence belongs to the ABC transporter superfamily. Energy-coupling factor EcfA family. In terms of assembly, forms a stable energy-coupling factor (ECF) transporter complex composed of 2 membrane-embedded substrate-binding proteins (S component), 2 ATP-binding proteins (A component) and 2 transmembrane proteins (T component).

The protein localises to the cell membrane. In terms of biological role, ATP-binding (A) component of a common energy-coupling factor (ECF) ABC-transporter complex. Unlike classic ABC transporters this ECF transporter provides the energy necessary to transport a number of different substrates. The polypeptide is Energy-coupling factor transporter ATP-binding protein EcfA (Methanoculleus marisnigri (strain ATCC 35101 / DSM 1498 / JR1)).